Here is a 308-residue protein sequence, read N- to C-terminus: Polyprenyl-phosphate transporter (308 aa).

A run of 8 helical transmembrane segments spans residues 15–35 (GLAMGAADVVPGVSGGTIAFI), 69–89 (INGLFLITLFGGIFTSIATLA), 91–111 (LISWLLVTHPIPIWSFFFGLI), 130–150 (LLWLIAGAIFAYGITVLKPLH), 163–183 (AIAICAMILPGISGSFILLLI), 200–220 (ILLIFLTGCVIGLLSFSHILS), 228–248 (DVTLTFLTGLMLGTLPKIWPW), and 282–302 (PSQWLLALVLMLAAVALVLGL).

Belongs to the PopT family.

Its subcellular location is the cell inner membrane. Its activity is regulated as follows. Active in alkaline conditions. In terms of biological role, flippase that catalyzes the transport of undecaprenyl phosphate (UndP) across the cytoplasmic membrane, from the external side to the cytoplasmic side. Is involved in UndP recycling during peptidoglycan synthesis. Required for cell shape maintenance at alkaline pH and peptidoglycan maintenance. Required by the cholera pathogen for growth and cell shape maintenance in the intestine. This is Polyprenyl-phosphate transporter from Vibrio cholerae serotype O1 (strain ATCC 39315 / El Tor Inaba N16961).